The chain runs to 423 residues: MTTQMEDVEEKVINEEYKIWKRHTPFLYDMVITHALEWPSLTVAWLPVKTSQPNKPYSIEKVILGTHTSDEEQNYLMVAKVHLPVDEASIESLKYDDTKGEVGGIGNVSEKIEIIQKINHEGEVNRARVMPQNHSIIATKTVSSEVYIFDTTKHPLEPTPDGKCSPNLKLTGHKKEGYGISWNPRKEGHLLSCSDDQSICMWDISAASKSDSTLDALNIYNGHTSIVEDVAWHYIHDTFFGSVGDDKKLMIWDTRTGTKPIHVVEAHNSEVNCLSFNPFCEFLVATGSTDKTVALWDMRNLGNRLHSLISHTDEVFQVQFSPHNETVLASCGSDRRVNVWDLSRIGEEQNNEDAADGPPELLFIHGGHTSKISDFSWNPNDPWSIASVAEDNILQIWQMAENIYNDREDDLENSKVTNAQIGE.

6 WD repeats span residues 119-159, 172-212, 222-262, 266-306, 310-350, and 367-407; these read NHEG…LEPT, GHKK…KSDS, GHTS…KPIH, AHNS…NRLH, SHTD…EEQN, and GHTS…YNDR.

Belongs to the WD repeat RBAP46/RBAP48/MSI1 family. Probably binds directly to helix 1 of the histone fold of histone H4, a region that is not accessible when H4 is in chromatin.

It is found in the nucleus. In terms of biological role, core histone-binding subunit that may target chromatin assembly factors, chromatin remodeling factors and histone deacetylases to their histone substrates in a manner that is regulated by nucleosomal DNA. Component of several complexes which regulate chromatin metabolism. This Dictyostelium discoideum (Social amoeba) protein is Probable histone-binding protein rbbD (rbbD).